We begin with the raw amino-acid sequence, 427 residues long: UPF0229 protein YeaH (427 aa).

Residues 79–90 (NDHFVQNDRIER) show a composition bias toward basic and acidic residues. Positions 79 to 110 (NDHFVQNDRIERPQGGGGGSGSGQGQASQDGE) are disordered. Positions 92 to 102 (QGGGGGSGSGQ) are enriched in gly residues.

Belongs to the UPF0229 family.

The sequence is that of UPF0229 protein YeaH from Escherichia coli O127:H6 (strain E2348/69 / EPEC).